A 703-amino-acid chain; its full sequence is Polyribonucleotide nucleotidyltransferase (703 aa).

Positions 486 and 492 each coordinate Mg(2+). Residues 553-614 (PRITTIWIKP…AACDAAIQMI (62 aa)) form the KH domain. The S1 motif domain maps to 624-692 (GKLYMGTVKK…KQGKIKLSRK (69 aa)).

It belongs to the polyribonucleotide nucleotidyltransferase family. The cofactor is Mg(2+).

Its subcellular location is the cytoplasm. The enzyme catalyses RNA(n+1) + phosphate = RNA(n) + a ribonucleoside 5'-diphosphate. Involved in mRNA degradation. Catalyzes the phosphorolysis of single-stranded polyribonucleotides processively in the 3'- to 5'-direction. The polypeptide is Polyribonucleotide nucleotidyltransferase (Trichlorobacter lovleyi (strain ATCC BAA-1151 / DSM 17278 / SZ) (Geobacter lovleyi)).